Reading from the N-terminus, the 964-residue chain is MASGKVEKMASIDAQLRLLAPKKVSEDDKLVEYDALLLDRFLDILESLHGSGIRETVQELYEHAAEYERTHDTKKLEELGNLITSLDAGDSIVIAKSFSQMLNLANLAEEVQLAYRRRIKKTKKGDFADESSAITESDFEETLRRLVDLKKSPEEIFATLKNQTVDLVLTAHPTQSVRRSLLQKHGRIRDCLSQLYAKDISPDDKQELDEALQRAIQAAFRTDEIRRVQPTPQDEMRMGMSYFHETIWKGVPKFLRRVDTALKNIGINERVPYNVPLIQFSSWMGGDRDGNPRVTPEVTRDVVLLARMMAANMYFTQITDLMFELSMWRCNDEVRARAQELHSQSKSDAKHYIEFWKQIPLSEPYRVILGDVRDKLYNTREHAHKLLANGSSDVPEESTFTHIDQFLEPLELCYKSLCASGDQPIADGSLLDFMRQVSTFGLSLVKLDIRQESDRHTEVMDAITTHLGIGSYRSWSEEKRQEWLLSELRGKRPLFGSDLPMSYEVADAIGTFRVLAELPNDSFGAYIISMATAPSDVLAVELLQRECGIKKPLRVVPLFEKLADLQSAAASMTRLFSIDWYKNRINGTQEVMIGYSDSGKDAGRLSAAWQLYKVQEQLIQVAKEYGVKLTMFHGRGGTVGRGGGPTHLALLSQPPDTIHGSLRVTIQGEVIEQSFGEEHLCFRTLERYTAATLEHGIDPPTSPKPEWRALMDEMAVITTKEYRSVVLQEPRFVEYFRSATPELEYGRMNIGSRPAKRKPGGGIETLRAIPWIFSWTQTRFHLPVWLGCGAAFKHVIEKDIKNLAMLKDMYNQWSFFRVTIDLLEMVFAKGDPGIAALYDKLLVKDELKPFGENLRKSYLEAQKFLLEIAGHKDPLDADPYLKQILRLRDPYTTTLNVFQVYTLKRIRDPSFHVTVRPHLSKEMDANSLAADLVKLNPTSEYPPGLEDTLILTMKGIAAGMQNTG.

Ser11 is subject to Phosphoserine. Residues His172 and Lys600 contribute to the active site.

This sequence belongs to the PEPCase type 1 family. Homotetramer. Requires Mg(2+) as cofactor.

It is found in the cytoplasm. It carries out the reaction oxaloacetate + phosphate = phosphoenolpyruvate + hydrogencarbonate. It functions in the pathway photosynthesis; C4 acid pathway. Its activity is regulated as follows. By light-reversible phosphorylation. In terms of biological role, through the carboxylation of phosphoenolpyruvate (PEP) it forms oxaloacetate, a four-carbon dicarboxylic acid source for the tricarboxylic acid cycle. The protein is Phosphoenolpyruvate carboxylase of Amaranthus hypochondriacus (Prince-of-Wales feather).